Here is a 159-residue protein sequence, read N- to C-terminus: Transcription elongation factor GreA (159 aa).

The stretch at Ala46–Gln73 forms a coiled coil.

This sequence belongs to the GreA/GreB family.

Functionally, necessary for efficient RNA polymerase transcription elongation past template-encoded arresting sites. The arresting sites in DNA have the property of trapping a certain fraction of elongating RNA polymerases that pass through, resulting in locked ternary complexes. Cleavage of the nascent transcript by cleavage factors such as GreA or GreB allows the resumption of elongation from the new 3'terminus. GreA releases sequences of 2 to 3 nucleotides. The chain is Transcription elongation factor GreA from Vesicomyosocius okutanii subsp. Calyptogena okutanii (strain HA).